The primary structure comprises 120 residues: MSKLKITNARRKQRVRIALRRAAGGRPRLSVFRSSKHIYAQVIDDQKGETLASASSLEKTMREGGKTGANIDAAKAVGKLLAERAVKNGVKEVVFDRGGYLYHGRVKALADAARESGLSF.

Belongs to the universal ribosomal protein uL18 family. As to quaternary structure, part of the 50S ribosomal subunit; part of the 5S rRNA/L5/L18/L25 subcomplex. Contacts the 5S and 23S rRNAs.

In terms of biological role, this is one of the proteins that bind and probably mediate the attachment of the 5S RNA into the large ribosomal subunit, where it forms part of the central protuberance. The chain is Large ribosomal subunit protein uL18 from Afipia carboxidovorans (strain ATCC 49405 / DSM 1227 / KCTC 32145 / OM5) (Oligotropha carboxidovorans).